The following is a 77-amino-acid chain: Small ribosomal subunit protein uS17 (77 aa).

The protein belongs to the universal ribosomal protein uS17 family. Part of the 30S ribosomal subunit.

One of the primary rRNA binding proteins, it binds specifically to the 5'-end of 16S ribosomal RNA. The sequence is that of Small ribosomal subunit protein uS17 from Anaplasma marginale (strain St. Maries).